The sequence spans 757 residues: Dynamin-related protein DNM1 (757 aa).

The 309-residue stretch at 25–333 (TLDLPILAVV…LLSHIRDKLP (309 aa)) folds into the Dynamin-type G domain. The interval 35 to 42 (GSQSSGKS) is G1 motif. Position 35–42 (35–42 (GSQSSGKS)) interacts with GTP. Residues 61 to 63 (VTR) are G2 motif. Positions 175-178 (DLPG) are G3 motif. GTP-binding positions include 175 to 179 (DLPGI) and 244 to 247 (TKLD). The tract at residues 244-247 (TKLD) is G4 motif. The segment at 274 to 277 (VNRS) is G5 motif. The tract at residues 557–597 (SKLSQQENGQTNGINGTSSISSNIDQDSAKNSDYDDDGIDA) is disordered. Residues 567–580 (TNGINGTSSISSNI) show a composition bias toward low complexity. Ser629 carries the phosphoserine modification. One can recognise a GED domain in the interval 670-757 (CELIKRLIVS…KAATLISNIL (88 aa)).

It belongs to the TRAFAC class dynamin-like GTPase superfamily. Dynamin/Fzo/YdjA family. In terms of assembly, interacts with FIS1 and MDV1.

Its subcellular location is the mitochondrion outer membrane. The enzyme catalyses GTP + H2O = GDP + phosphate + H(+). Functionally, microtubule-associated force-producing protein that participates mitochondrial fission. Fission of mitochondria occurs in many cell types and constitutes an important step in mitochondria morphology, which is balanced between fusion and fission. Functions antagonistically with FZO1. The protein is Dynamin-related protein DNM1 (DNM1) of Saccharomyces cerevisiae (strain ATCC 204508 / S288c) (Baker's yeast).